Here is an 89-residue protein sequence, read N- to C-terminus: Sodium channel toxin To13 (89 aa).

A signal peptide spans Met-1 to Gly-18. The region spanning Lys-20 to Lys-87 is the LCN-type CS-alpha/beta domain. 4 disulfide bridges follow: Cys-30–Cys-86, Cys-34–Cys-60, Cys-45–Cys-67, and Cys-49–Cys-69.

This sequence belongs to the long (4 C-C) scorpion toxin superfamily. Sodium channel inhibitor family. Expressed by the venom gland.

Its subcellular location is the secreted. Functionally, inhibits voltage-gated sodium channels (Nav). This Tityus obscurus (Amazonian scorpion) protein is Sodium channel toxin To13.